Here is an 818-residue protein sequence, read N- to C-terminus: Structure-specific endonuclease subunit SLX4 (818 aa).

5 disordered regions span residues Met-1 to Ser-39, Arg-53 to Asn-151, Phe-279 to Ser-324, Asn-413 to Lys-437, and Met-587 to Glu-712. Positions Val-28–Ser-39 are enriched in low complexity. Basic and acidic residues predominate over residues Pro-90 to Phe-103. Residues Thr-306–Thr-316 are compositionally biased toward low complexity. Residues Thr-426–Lys-437 show a composition bias toward polar residues. Basic and acidic residues predominate over residues Gln-604–Ala-618. Polar residues-rich tracts occupy residues Ser-621–Gly-640, Ser-652–Val-672, and Ser-696–Glu-712.

It belongs to the SLX4 family. Forms a heterodimer with SLX1. Post-translationally, phosphorylated in response to DNA damage.

Its subcellular location is the nucleus. Regulatory subunit of the SLX1-SLX4 structure-specific endonuclease that resolves DNA secondary structures generated during DNA repair and recombination. Has endonuclease activity towards branched DNA substrates, introducing single-strand cuts in duplex DNA close to junctions with ss-DNA. In Uncinocarpus reesii (strain UAMH 1704), this protein is Structure-specific endonuclease subunit SLX4.